A 184-amino-acid chain; its full sequence is Deoxyuridine 5'-triphosphate nucleotidohydrolase (184 aa).

The span at 1-16 (MPHTQTDAHQNNQENF) shows a compositional bias: polar residues. The tract at residues 1–25 (MPHTQTDAHQNNQENFSSSLISSRP) is disordered. Residues 96–98 (RSG), asparagine 109, 113–115 (TID), and lysine 123 each bind substrate. A disordered region spans residues 165 to 184 (STKNTVGNRGAGGFGSTGHD). Positions 173–184 (RGAGGFGSTGHD) are enriched in gly residues.

It belongs to the dUTPase family. The cofactor is Mg(2+).

It carries out the reaction dUTP + H2O = dUMP + diphosphate + H(+). Its pathway is pyrimidine metabolism; dUMP biosynthesis; dUMP from dCTP (dUTP route): step 2/2. This enzyme is involved in nucleotide metabolism: it produces dUMP, the immediate precursor of thymidine nucleotides and it decreases the intracellular concentration of dUTP so that uracil cannot be incorporated into DNA. In Bartonella henselae (strain ATCC 49882 / DSM 28221 / CCUG 30454 / Houston 1) (Rochalimaea henselae), this protein is Deoxyuridine 5'-triphosphate nucleotidohydrolase.